The primary structure comprises 131 residues: Small ribosomal subunit protein bS6 (131 aa).

Residues 96-131 (VTEASPMVKAKDERRERRDDFANETADDAEAGDSEE) are disordered. Residues 104-116 (KAKDERRERRDDF) are compositionally biased toward basic and acidic residues. Positions 120–131 (TADDAEAGDSEE) are enriched in acidic residues.

This sequence belongs to the bacterial ribosomal protein bS6 family.

Binds together with bS18 to 16S ribosomal RNA. The polypeptide is Small ribosomal subunit protein bS6 (Salmonella arizonae (strain ATCC BAA-731 / CDC346-86 / RSK2980)).